Here is a 289-residue protein sequence, read N- to C-terminus: Dermonecrotic toxin LarSicTox-betaID1 (289 aa).

The first 2 residues, 1-2 (EG), serve as a signal peptide directing secretion. Residues 3–11 (AEQDGSERT) constitute a propeptide that is removed on maturation. H22 is an active-site residue. The Mg(2+) site is built by E42 and D44. The active-site Nucleophile is H58. 2 disulfide bridges follow: C62–C68 and C64–C207. D102 contributes to the Mg(2+) binding site.

It belongs to the arthropod phospholipase D family. Class II subfamily. The cofactor is Mg(2+). Expressed by the venom gland.

It localises to the secreted. The catalysed reaction is an N-(acyl)-sphingosylphosphocholine = an N-(acyl)-sphingosyl-1,3-cyclic phosphate + choline. It carries out the reaction N-hexanoyl-sphing-4-enine-1-phosphocholine = N-(hexanoyl)-sphing-4-enine-1,3-cyclic phosphate + choline. The enzyme catalyses N-(dodecanoyl)-sphing-4-enine-1-phosphocholine = N-dodecanoyl-sphing-4-enine-1,3-cyclic phosphate + choline. It catalyses the reaction an N-(acyl)-sphingosylphosphoethanolamine = an N-(acyl)-sphingosyl-1,3-cyclic phosphate + ethanolamine. The catalysed reaction is N-dodecanoyl-heptadecasphing-4-enine-1-phosphoethanolamine = N-dodecanoyl-heptadecasphing-4-enine-1,3-cyclic phosphate + ethanolamine. It carries out the reaction a 1-acyl-sn-glycero-3-phosphocholine = a 1-acyl-sn-glycero-2,3-cyclic phosphate + choline. The enzyme catalyses 1-tetradecanoyl-sn-glycero-3-phosphocholine = 1-tetradecanoyl-sn-glycero-2,3-cyclic phosphate + choline. It catalyses the reaction 1-octanoyl-sn-glycero-3-phosphocholine = 1-octanoyl-sn-glycero-2,3-cyclic phosphate + choline. The catalysed reaction is a 1-acyl-sn-glycero-3-phosphoethanolamine = a 1-acyl-sn-glycero-2,3-cyclic phosphate + ethanolamine. It carries out the reaction 1-tetradecanoyl-sn-glycero-3-phosphoethanolamine = 1-tetradecanoyl-sn-glycero-2,3-cyclic phosphate + ethanolamine. Dermonecrotic toxins cleave the phosphodiester linkage between the phosphate and headgroup of certain phospholipids (sphingolipid and lysolipid substrates), forming an alcohol (often choline) and a cyclic phosphate. This toxin acts on sphingomyelin (SM) and on ceramide phosphoethanolamine (CPE) with high activity. It also acts on lysophosphatidylcholine (LPC) and on lysophosphatidylethanolamine (LPE) with moderate activity. It is not active on lysophosphatidylserine (LPS), and lysophosphatidylglycerol (LPG). It acts by transphosphatidylation, releasing exclusively cyclic phosphate as second products. It is not surprising that spider toxins have affinity for ethanolamine-containing sphingolipids since they are common in insect prey. On mammals, induces dermonecrosis, hemolysis, increased vascular permeability, edema, inflammatory response, and platelet aggregation. This Loxosceles arizonica (Arizona brown spider) protein is Dermonecrotic toxin LarSicTox-betaID1.